The primary structure comprises 154 residues: Periplasmic nitrate reductase, electron transfer subunit (154 aa).

The first 24 residues, 1 to 24, serve as a signal peptide directing secretion; that stretch reads MSMHPALRLLATVLVALGAGPAFT. Residues 27 to 47 are disordered; that stretch reads APRLTGADRPMSEVAAPPLPE. The heme c site is built by histidine 68, cysteine 82, cysteine 85, histidine 86, histidine 103, cysteine 122, cysteine 125, and histidine 126.

The protein belongs to the NapB family. As to quaternary structure, component of the periplasmic nitrate reductase NapAB complex composed of NapA and NapB. Post-translationally, binds 2 heme C groups per subunit.

Its subcellular location is the periplasm. Electron transfer subunit of the periplasmic nitrate reductase complex NapAB. Receives electrons from the membrane-anchored tetraheme c-type NapC protein and transfers these to NapA subunit, thus allowing electron flow between membrane and periplasm. Essential for periplasmic nitrate reduction with nitrate as the terminal electron acceptor. The polypeptide is Periplasmic nitrate reductase, electron transfer subunit (Cereibacter sphaeroides (Rhodobacter sphaeroides)).